The primary structure comprises 366 residues: E3 ubiquitin-protein ligase SINA-like 1 (366 aa).

The tract at residues 1-37 (MVKGTNAEQALAREEASSSRPKRQRVPSIVEEEGENG) is disordered. Residues 56–92 (CPICCNALTIPIFQCDKGHIACSSCCTNVSNKCPYCS) form an RING-type; degenerate zinc finger. Residues 106–354 (VVEAFIVRCP…KGTYICIRSL (249 aa)) are SBD. The SIAH-type; degenerate zinc-finger motif lies at 109–232 (AFIVRCPIVA…LYSHYAANHK (124 aa)). Zn(2+) is bound by residues Cys-114, Cys-186, His-198, Cys-202, Cys-209, Cys-214, His-226, and His-231.

This sequence belongs to the SINA (Seven in absentia) family.

It catalyses the reaction S-ubiquitinyl-[E2 ubiquitin-conjugating enzyme]-L-cysteine + [acceptor protein]-L-lysine = [E2 ubiquitin-conjugating enzyme]-L-cysteine + N(6)-ubiquitinyl-[acceptor protein]-L-lysine.. Its pathway is protein modification; protein ubiquitination. Functionally, E3 ubiquitin-protein ligase that mediates ubiquitination and subsequent proteasomal degradation of target proteins. E3 ubiquitin ligases accept ubiquitin from an E2 ubiquitin-conjugating enzyme in the form of a thioester and then directly transfers the ubiquitin to targeted substrates. It probably triggers the ubiquitin-mediated degradation of different substrates. The polypeptide is E3 ubiquitin-protein ligase SINA-like 1 (Arabidopsis thaliana (Mouse-ear cress)).